The sequence spans 386 residues: Succinate--CoA ligase [ADP-forming] subunit beta (386 aa).

One can recognise an ATP-grasp domain in the interval 9-244 (KAILRSYGVS…LDEEDPKEIE (236 aa)). ATP contacts are provided by residues K46, 53 to 55 (GRG), E99, C102, and E107. Residues N199 and D213 each coordinate Mg(2+). Substrate-binding positions include N264 and 321–323 (GIM).

Belongs to the succinate/malate CoA ligase beta subunit family. As to quaternary structure, heterotetramer of two alpha and two beta subunits. It depends on Mg(2+) as a cofactor.

It carries out the reaction succinate + ATP + CoA = succinyl-CoA + ADP + phosphate. It catalyses the reaction GTP + succinate + CoA = succinyl-CoA + GDP + phosphate. It participates in carbohydrate metabolism; tricarboxylic acid cycle; succinate from succinyl-CoA (ligase route): step 1/1. Its function is as follows. Succinyl-CoA synthetase functions in the citric acid cycle (TCA), coupling the hydrolysis of succinyl-CoA to the synthesis of either ATP or GTP and thus represents the only step of substrate-level phosphorylation in the TCA. The beta subunit provides nucleotide specificity of the enzyme and binds the substrate succinate, while the binding sites for coenzyme A and phosphate are found in the alpha subunit. The protein is Succinate--CoA ligase [ADP-forming] subunit beta of Bacillus cytotoxicus (strain DSM 22905 / CIP 110041 / 391-98 / NVH 391-98).